The sequence spans 856 residues: Increased rDNA silencing protein 4 (856 aa).

Disordered stretches follow at residues 1-204, 230-563, and 589-672; these read MSAS…EPKS, KQEE…PTPE, and TSLE…DEDL. Composition is skewed to low complexity over residues 12–42, 67–84, and 111–130; these read GPASPTSSSTGASTNPATSGLAAALKGATLA, VPTPGTGSVSTSTSRTVG, and SRVVTSTPSSSSSVGSAGRT. The span at 152-162 shows a compositional bias: basic and acidic residues; the sequence is HVEERANDHAP. Low complexity predominate over residues 194 to 204; the sequence is ASAKPSSEPKS. The span at 239–254 shows a compositional bias: basic residues; the sequence is KKKKKKKPRPASKTQH. 2 stretches are compositionally biased toward polar residues: residues 255 to 275 and 303 to 315; these read HQTLTSPSPTPSEGLSIENQC and SLSTVESIKSSTG. Residues 329–347 are compositionally biased toward basic and acidic residues; the sequence is GETRNRNGDVRDKPSREGG. 3 stretches are compositionally biased toward polar residues: residues 396 to 410, 451 to 468, and 478 to 488; these read PVSQHAQISETTIIS, RVVSPSVDQSQTIRQSAE, and RNSTSSDETFV. Residues 503–514 are compositionally biased toward basic and acidic residues; sequence KELERVRPRLDR. A compositionally biased stretch (low complexity) spans 517–535; the sequence is TSTSSRASRVSTPASVRSP. The segment covering 603–620 has biased composition (basic residues); the sequence is RRGHRHHHLPHPHLRHRT. Residues 644 to 654 show a composition bias toward polar residues; it reads PSRQTEHTQPA. The region spanning 743-832 is the EH domain; it reads DSLGQVDLSR…EGVWESAMDR (90 aa).

The protein belongs to the IRS4 family.

Functionally, positive regulator of phosphatidylinositol 4,5-bisphosphate turnover and negatively regulates signaling through the cell integrity pathway. Involved in rDNA silencing. This is Increased rDNA silencing protein 4 (irs-4) from Neurospora crassa (strain ATCC 24698 / 74-OR23-1A / CBS 708.71 / DSM 1257 / FGSC 987).